A 357-amino-acid polypeptide reads, in one-letter code: Beta-hexosaminidase (357 aa).

Residues Asp-72, Arg-80, Arg-146, and 176–177 (KH) contribute to the substrate site. The active-site Proton donor/acceptor is the His-189. Catalysis depends on Asp-260, which acts as the Nucleophile.

It belongs to the glycosyl hydrolase 3 family. NagZ subfamily.

The protein resides in the cytoplasm. It catalyses the reaction Hydrolysis of terminal non-reducing N-acetyl-D-hexosamine residues in N-acetyl-beta-D-hexosaminides.. Its pathway is cell wall biogenesis; peptidoglycan recycling. Plays a role in peptidoglycan recycling by cleaving the terminal beta-1,4-linked N-acetylglucosamine (GlcNAc) from peptide-linked peptidoglycan fragments, giving rise to free GlcNAc, anhydro-N-acetylmuramic acid and anhydro-N-acetylmuramic acid-linked peptides. The chain is Beta-hexosaminidase from Hydrogenovibrio crunogenus (strain DSM 25203 / XCL-2) (Thiomicrospira crunogena).